A 93-amino-acid chain; its full sequence is Small ribosomal subunit protein bS18 (93 aa).

This sequence belongs to the bacterial ribosomal protein bS18 family. As to quaternary structure, part of the 30S ribosomal subunit. Forms a tight heterodimer with protein bS6.

Binds as a heterodimer with protein bS6 to the central domain of the 16S rRNA, where it helps stabilize the platform of the 30S subunit. The polypeptide is Small ribosomal subunit protein bS18 (Variovorax paradoxus (strain S110)).